Consider the following 61-residue polypeptide: Small ribosomal subunit protein uS14 (61 aa).

Residues Cys-24, Cys-27, Cys-40, and Cys-43 each contribute to the Zn(2+) site.

The protein belongs to the universal ribosomal protein uS14 family. Zinc-binding uS14 subfamily. As to quaternary structure, part of the 30S ribosomal subunit. Contacts proteins S3 and S10. Zn(2+) serves as cofactor.

Binds 16S rRNA, required for the assembly of 30S particles and may also be responsible for determining the conformation of the 16S rRNA at the A site. This chain is Small ribosomal subunit protein uS14, found in Mycobacterium sp. (strain JLS).